A 121-amino-acid polypeptide reads, in one-letter code: Putative iron-sulfur cluster insertion protein ErpA (121 aa).

The iron-sulfur cluster site is built by cysteine 49, cysteine 113, and cysteine 115.

Belongs to the HesB/IscA family. In terms of assembly, homodimer. Iron-sulfur cluster serves as cofactor.

Its function is as follows. Required for insertion of 4Fe-4S clusters. This Nitrosomonas europaea (strain ATCC 19718 / CIP 103999 / KCTC 2705 / NBRC 14298) protein is Putative iron-sulfur cluster insertion protein ErpA.